Here is a 255-residue protein sequence, read N- to C-terminus: MSLLSAHLEQISISCQGIDSLPFPPPKIFTNALLSNPDITSLIRDTEAHERALFSVPPPPPRQTTLTAEQQQQQKPSNRRQTVFNVTGGEIRTGGVGSASTARRNTAVAAVLGGDLHAQIMRGTRARPGQQPGSGDIDMEVLLRGVEKLCAVYPLPGALERVPVIRQKWQAQSNTLAYYEAKIAEQQEMLDRIAQERMMNDGDGDVEMEDVEEVGMTEEDLRREEEEVRELDKRKRDLQARLRALDADLGGLLNV.

The interval 53–81 (LFSVPPPPPRQTTLTAEQQQQQKPSNRRQ) is disordered. The span at 63–81 (QTTLTAEQQQQQKPSNRRQ) shows a compositional bias: polar residues. Residues 176–248 (LAYYEAKIAE…QARLRALDAD (73 aa)) are a coiled coil.

This sequence belongs to the DASH complex SPC34 family. In terms of assembly, component of the DASH complex consisting of ASK1, DAD1, DAD2, DAD3, DAD4, DAM1, DUO1, HSK3, SPC19 and SPC34, with a stoichiometry of one copy of each subunit per complex. Multiple DASH complexes oligomerize to form a ring that encircles spindle microtubules and organizes the rod-like NDC80 complexes of the outer kinetochore of the outer kinetochore. DASH complex oligomerization strengthens microtubule attachments. On cytoplasmic microtubules, DASH complexes appear to form patches instead of rings.

The protein resides in the nucleus. The protein localises to the cytoplasm. It is found in the cytoskeleton. Its subcellular location is the spindle. It localises to the chromosome. The protein resides in the centromere. The protein localises to the kinetochore. Component of the DASH complex that connects microtubules with kinetochores and couples microtubule depolymerisation to chromosome movement; it is involved in retrieving kinetochores to the spindle poles before their re-orientation on the spindle in early mitosis and allows microtubule depolymerization to pull chromosomes apart and resist detachment during anaphase. Kinetochores, consisting of a centromere-associated inner segment and a microtubule-contacting outer segment, play a crucial role in chromosome segregation by mediating the physical connection between centromeric DNA and microtubules. Kinetochores also serve as an input point for the spindle assembly checkpoint, which delays anaphase until all chromosomes have bioriented on the mitotic spindle. The sequence is that of DASH complex subunit SPC34 from Chaetomium thermophilum (strain DSM 1495 / CBS 144.50 / IMI 039719) (Thermochaetoides thermophila).